Consider the following 298-residue polypeptide: Plasmodesmata-located protein 7 (298 aa).

An N-terminal signal peptide occupies residues 1 to 30; it reads MPMAKLRNIIKTLSIFFFLIAATAPSLSSA. Topologically, residues 31-258 are extracellular; that stretch reads TSATDTFVFG…YKTNYGGEKT (228 aa). Gnk2-homologous domains are found at residues 35 to 139 and 140 to 240; these read DTFV…NISF and LGQE…TDGA. Disulfide bonds link Cys42–Cys117, Cys93–Cys102, Cys105–Cys130, Cys152–Cys218, Cys194–Cys203, and Cys206–Cys231. The helical transmembrane segment at 259-279 threads the bilayer; it reads FAIIIGLLAAVVLLIIFLLFL. The segment at 259–279 is necessary and sufficient for plasmodesmal targeting; it reads FAIIIGLLAAVVLLIIFLLFL. Residues 280–298 lie on the Cytoplasmic side of the membrane; that stretch reads RGVCSRGGDFSILHSFTLI.

Belongs to the cysteine-rich repeat secretory protein family. Plasmodesmata-located proteins (PDLD) subfamily. In terms of assembly, (Microbial infection) Interacts with Grapevine fanleaf virus (GFLV) 2B-MP. As to expression, highly expressed in lateral root and elongation zone.

The protein resides in the cell membrane. The protein localises to the cell junction. It localises to the plasmodesma. Modulates cell-to-cell trafficking. The chain is Plasmodesmata-located protein 7 from Arabidopsis thaliana (Mouse-ear cress).